The chain runs to 160 residues: Endoribonuclease YbeY (160 aa).

Zn(2+) is bound by residues His-112, His-116, and His-122. The interval 141 to 160 (ELGHPDPYACDDEEPPSKEK) is disordered.

It belongs to the endoribonuclease YbeY family. It depends on Zn(2+) as a cofactor.

The protein localises to the cytoplasm. In terms of biological role, single strand-specific metallo-endoribonuclease involved in late-stage 70S ribosome quality control and in maturation of the 3' terminus of the 16S rRNA. This Pseudomonas aeruginosa (strain UCBPP-PA14) protein is Endoribonuclease YbeY.